A 215-amino-acid polypeptide reads, in one-letter code: MNEEGGYLGAMTYQCLYSPVMEKIKQQHRDDPRASLALNKLHTALTTCEQASPSFLYDFTKVLLDDSELSVNLQESYLRMHDTSPTNDLIVSGYEQNADYKELTKRAIELRRVLSRVPEEMSDRHAFLETIKLIASSIKKLLEAINAVYRIVPLTAQPAVEKRKREFVHYSKRFSNTLKTYFKDQNANQVSVSANQLVFQTTMIVRTINEKLRRG.

It belongs to the PDCD10 family. Interacts with gck-1. In terms of tissue distribution, expressed in pharynx, intestine, germline, vulva and excretory canals.

The protein localises to the cytoplasm. The protein resides in the apical cell membrane. Its function is as follows. Involved in excretory canal elongation during postembryonic development. Plays a role in promoting Golgi stability, ER integrity and vesicle transport probably by regulating the activation of Rho GTPase cdc-42. Involved in fertility. The sequence is that of Programmed cell death protein 10 homolog from Caenorhabditis elegans.